A 249-amino-acid polypeptide reads, in one-letter code: tRNA (guanine-N(1)-)-methyltransferase (249 aa).

Residues glycine 121 and 141 to 146 (LGDFVL) each bind S-adenosyl-L-methionine.

It belongs to the RNA methyltransferase TrmD family. As to quaternary structure, homodimer.

The protein localises to the cytoplasm. The enzyme catalyses guanosine(37) in tRNA + S-adenosyl-L-methionine = N(1)-methylguanosine(37) in tRNA + S-adenosyl-L-homocysteine + H(+). Functionally, specifically methylates guanosine-37 in various tRNAs. The protein is tRNA (guanine-N(1)-)-methyltransferase of Cereibacter sphaeroides (strain ATCC 17023 / DSM 158 / JCM 6121 / CCUG 31486 / LMG 2827 / NBRC 12203 / NCIMB 8253 / ATH 2.4.1.) (Rhodobacter sphaeroides).